Consider the following 270-residue polypeptide: MQSKLLLSTKLTSQGKTQLDQYFVSPPFKVMTLPAYDDAWQNGLNAMQMSSSPGLLASDLLDIEISLADDTALSLNTQAFTRVQSMNEGDYATQKTCIKLGKNSRLFYLPHPLVLHKDSSFKQTTEIEMSEQSELIYGEIVAIGRVLNGERFAFRHFASYLRISYQNRPIIADRIQWLPAKMALTSLSQMEDFSHQGSLTYVNLAKNAVEIKAMVSELQALAAEQKNMLIGVSQLNEGGLMVRVLAHRADIIQHLFERIGQVLKAQSNIV.

The protein belongs to the UreD family. In terms of assembly, ureD, UreF and UreG form a complex that acts as a GTP-hydrolysis-dependent molecular chaperone, activating the urease apoprotein by helping to assemble the nickel containing metallocenter of UreC. The UreE protein probably delivers the nickel.

The protein resides in the cytoplasm. Its function is as follows. Required for maturation of urease via the functional incorporation of the urease nickel metallocenter. The polypeptide is Urease accessory protein UreD (Actinobacillus pleuropneumoniae serotype 7 (strain AP76)).